A 199-amino-acid polypeptide reads, in one-letter code: 3-isopropylmalate dehydratase small subunit (199 aa).

This sequence belongs to the LeuD family. LeuD type 1 subfamily. As to quaternary structure, heterodimer of LeuC and LeuD.

It catalyses the reaction (2R,3S)-3-isopropylmalate = (2S)-2-isopropylmalate. It functions in the pathway amino-acid biosynthesis; L-leucine biosynthesis; L-leucine from 3-methyl-2-oxobutanoate: step 2/4. Its function is as follows. Catalyzes the isomerization between 2-isopropylmalate and 3-isopropylmalate, via the formation of 2-isopropylmaleate. The polypeptide is 3-isopropylmalate dehydratase small subunit (Bacillus velezensis (strain DSM 23117 / BGSC 10A6 / LMG 26770 / FZB42) (Bacillus amyloliquefaciens subsp. plantarum)).